A 1758-amino-acid polypeptide reads, in one-letter code: Condensin-2 complex subunit hcp-6 (1758 aa).

4 disordered regions span residues 428–501 (DPGA…KAKE), 969–1008 (ENGS…KGGM), 1379–1460 (QKRL…ARLL), and 1500–1656 (SKQA…LSRG). Residues 438–462 (EQNEEEDEEEEGEDEEEEEENEQDD) are compositionally biased toward acidic residues. The segment covering 463–473 (VAVKEEEQSDK) has biased composition (basic and acidic residues). Residues 474–484 (SDEENDGDNEE) show a composition bias toward acidic residues. Residues 485–501 (NVSKKKEEKKKEKKAKE) are compositionally biased toward basic and acidic residues. The span at 969 to 979 (ENGSSDASTVN) shows a compositional bias: polar residues. Residues 999–1008 (SSQKSSKGGM) show a composition bias toward low complexity. Residues 1326 to 1385 (CIEHKNDIDEILQDNRQLKDEMMFELQRVKQRTEEANRILDEYLKRVAEFKKQQKRLSKS) are a coiled coil. Residues 1414-1423 (EDQENVEEEV) are compositionally biased toward acidic residues. 2 stretches are compositionally biased toward basic and acidic residues: residues 1424-1437 (EMRT…DADV) and 1500-1512 (SKQA…KTIV). 2 stretches are compositionally biased toward polar residues: residues 1602–1618 (ISAN…QSTE) and 1640–1651 (VPTSSSGNTEND).

Component of the condensin-2 complex.

The protein localises to the nucleus. Its subcellular location is the chromosome. The protein resides in the centromere. In terms of biological role, chromosomal protein which is recruited to mitotic chromosomes by hcp-3 (CENP-A) and hcp-4 (CENP-C). Involved in chromosome segregation during mitosis, playing a role in chromosome condensation and in maintaining chromosome morphology, rigidity and orientation during mitosis. The chain is Condensin-2 complex subunit hcp-6 from Caenorhabditis elegans.